A 148-amino-acid chain; its full sequence is 3-dehydroquinate dehydratase (148 aa).

Tyr24 acts as the Proton acceptor in catalysis. Substrate-binding residues include Asn80, His86, and Asp93. The Proton donor role is filled by His106. Substrate is bound by residues 107–108 and Arg117; that span reads IS.

Belongs to the type-II 3-dehydroquinase family. In terms of assembly, homododecamer.

It carries out the reaction 3-dehydroquinate = 3-dehydroshikimate + H2O. It functions in the pathway metabolic intermediate biosynthesis; chorismate biosynthesis; chorismate from D-erythrose 4-phosphate and phosphoenolpyruvate: step 3/7. Functionally, catalyzes a trans-dehydration via an enolate intermediate. The polypeptide is 3-dehydroquinate dehydratase (Acidovorax ebreus (strain TPSY) (Diaphorobacter sp. (strain TPSY))).